A 314-amino-acid polypeptide reads, in one-letter code: Flotillin-like protein FloA (314 aa).

The helical transmembrane segment at 4–24 threads the bilayer; it reads IGPIIIAVLIIIFLIVFFTLV.

It belongs to the flotillin-like FloA family. As to quaternary structure, homooligomerizes.

It is found in the cell membrane. The protein resides in the membrane raft. Its function is as follows. Found in functional membrane microdomains (FMM) that may be equivalent to eukaryotic membrane rafts. FMMs are highly dynamic and increase in number as cells age. Flotillins are thought to be important factors in membrane fluidity. The chain is Flotillin-like protein FloA from Listeria innocua serovar 6a (strain ATCC BAA-680 / CLIP 11262).